The sequence spans 627 residues: uncharacterized protein (627 aa).

Disordered stretches follow at residues 441 to 466 and 608 to 627; these read EAVP…QGEN and DLRG…TEDR. Positions 615–627 are enriched in basic and acidic residues; the sequence is DYERGKGESTEDR.

This is an uncharacterized protein from Homo sapiens (Human).